We begin with the raw amino-acid sequence, 203 residues long: Glycerol-3-phosphate acyltransferase (203 aa).

4 helical membrane passes run 6 to 26, 82 to 102, 118 to 138, and 141 to 161; these read LTLL…AVLV, AISL…PIFF, APIG…LLLI, and YSSL…WWLD.

Belongs to the PlsY family. In terms of assembly, probably interacts with PlsX.

It localises to the cell inner membrane. The enzyme catalyses an acyl phosphate + sn-glycerol 3-phosphate = a 1-acyl-sn-glycero-3-phosphate + phosphate. It functions in the pathway lipid metabolism; phospholipid metabolism. In terms of biological role, catalyzes the transfer of an acyl group from acyl-phosphate (acyl-PO(4)) to glycerol-3-phosphate (G3P) to form lysophosphatidic acid (LPA). This enzyme utilizes acyl-phosphate as fatty acyl donor, but not acyl-CoA or acyl-ACP. The protein is Glycerol-3-phosphate acyltransferase of Shewanella putrefaciens (strain CN-32 / ATCC BAA-453).